A 357-amino-acid polypeptide reads, in one-letter code: Sorbitol dehydrogenase 1 (357 aa).

Cys-43 is a Zn(2+) binding site. Tyr-49 is a substrate binding site. Zn(2+) is bound by residues His-68 and Glu-69. Glu-154 contributes to the substrate binding site. NAD(+)-binding positions include Asp-202, Lys-207, 275-277 (VGM), and 299-301 (CFR). Residues Arg-301 and Tyr-302 each coordinate substrate.

Belongs to the zinc-containing alcohol dehydrogenase family. As to quaternary structure, homotetramer. The cofactor is Zn(2+).

The enzyme catalyses keto-D-fructose + NADH + H(+) = D-sorbitol + NAD(+). The catalysed reaction is xylitol + NAD(+) = D-xylulose + NADH + H(+). In terms of biological role, polyol dehydrogenase that catalyzes the reversible NAD(+)-dependent oxidation of various sugar alcohols. Is active with D-sorbitol (D-glucitol) and xylitol as substrates, leading to the C2-oxidized product D-fructose and D-xylulose, respectively. Is likely involved in the utilization of D-sorbitol as a sole carbon source for growth. Has no activity on mannitol and primary alcohols such as ethanol. The sequence is that of Sorbitol dehydrogenase 1 (SOR1) from Saccharomyces cerevisiae (strain ATCC 204508 / S288c) (Baker's yeast).